A 105-amino-acid chain; its full sequence is uncharacterized protein (105 aa).

A run of 2 helical transmembrane segments spans residues 26–46 and 66–86; these read NVLIASWLSFVVFLILGCIAI and SALAWTFFVLAILFGAATLAI.

It is found in the cell membrane. This is an uncharacterized protein from Mycoplasma pneumoniae (strain ATCC 29342 / M129 / Subtype 1) (Mycoplasmoides pneumoniae).